The primary structure comprises 181 residues: uncharacterized protein (181 aa).

Positions 1 to 23 (MKKCLLFLTTIALILSLSTNAFA) are cleaved as a signal peptide.

This is an uncharacterized protein from Bacillus subtilis (strain 168).